The chain runs to 458 residues: uncharacterized protein (458 aa).

The segment covering 1 to 10 (MQAEPKKSQA) has biased composition (basic and acidic residues). A disordered region spans residues 1–20 (MQAEPKKSQAEQRAVAEPVS). The region spanning 23 to 84 (VSLVGEEYEV…ARFLRADAVE (62 aa)) is the TRAM domain. [4Fe-4S] cluster is bound by residues C97, C105, C108, and C193. Positions 287, 316, 340, and 384 each coordinate S-adenosyl-L-methionine. Residue C411 is the Nucleophile of the active site.

Belongs to the class I-like SAM-binding methyltransferase superfamily. RNA M5U methyltransferase family.

This is an uncharacterized protein from Streptomyces coelicolor (strain ATCC BAA-471 / A3(2) / M145).